Consider the following 309-residue polypeptide: Lipoyl synthase (309 aa).

7 residues coordinate [4Fe-4S] cluster: Cys56, Cys61, Cys67, Cys82, Cys86, Cys89, and Ser296. Residues 68 to 285 (FKRGTATFMI…RVAGLKMGFS (218 aa)) form the Radical SAM core domain.

This sequence belongs to the radical SAM superfamily. Lipoyl synthase family. [4Fe-4S] cluster is required as a cofactor.

Its subcellular location is the cytoplasm. It catalyses the reaction [[Fe-S] cluster scaffold protein carrying a second [4Fe-4S](2+) cluster] + N(6)-octanoyl-L-lysyl-[protein] + 2 oxidized [2Fe-2S]-[ferredoxin] + 2 S-adenosyl-L-methionine + 4 H(+) = [[Fe-S] cluster scaffold protein] + N(6)-[(R)-dihydrolipoyl]-L-lysyl-[protein] + 4 Fe(3+) + 2 hydrogen sulfide + 2 5'-deoxyadenosine + 2 L-methionine + 2 reduced [2Fe-2S]-[ferredoxin]. It functions in the pathway protein modification; protein lipoylation via endogenous pathway; protein N(6)-(lipoyl)lysine from octanoyl-[acyl-carrier-protein]: step 2/2. Functionally, catalyzes the radical-mediated insertion of two sulfur atoms into the C-6 and C-8 positions of the octanoyl moiety bound to the lipoyl domains of lipoate-dependent enzymes, thereby converting the octanoylated domains into lipoylated derivatives. The sequence is that of Lipoyl synthase from Syntrophotalea carbinolica (strain DSM 2380 / NBRC 103641 / GraBd1) (Pelobacter carbinolicus).